Consider the following 107-residue polypeptide: V-type proton ATPase subunit G (107 aa).

It belongs to the V-ATPase G subunit family. V-ATPase is a heteromultimeric enzyme composed of a peripheral catalytic V1 complex (components A to H) attached to an integral membrane V0 proton pore complex (components: a, c, c', c'' and d).

Catalytic subunit of the peripheral V1 complex of vacuolar ATPase (V-ATPase). V-ATPase is responsible for acidifying a variety of intracellular compartments in eukaryotic cells. This Dictyostelium discoideum (Social amoeba) protein is V-type proton ATPase subunit G (atp6v1g).